A 159-amino-acid polypeptide reads, in one-letter code: Large ribosomal subunit protein uL15 (159 aa).

A disordered region spans residues 14–44 (ASRKRVGRGRATGWGCTSGRGNKGQNSRAGA). The segment covering 23–35 (RATGWGCTSGRGN) has biased composition (gly residues).

Belongs to the universal ribosomal protein uL15 family. As to quaternary structure, part of the 50S ribosomal subunit.

Functionally, binds to the 23S rRNA. This is Large ribosomal subunit protein uL15 from Solidesulfovibrio magneticus (strain ATCC 700980 / DSM 13731 / RS-1) (Desulfovibrio magneticus).